The chain runs to 1064 residues: Lysine-specific demethylase 4A (1064 aa).

An N-acetylalanine modification is found at Ala-2. A JmjN domain is found at 14-56 (IMTFYPTMEEFRNFSRYIAYIESQGAHRAGLAKVVPPKEWKPR). Position 132 (Tyr-132) interacts with 2-oxoglutarate. A JmjC domain is found at 142–308 (EKHVDEWNIG…YGKQAVLCSC (167 aa)). Fe cation contacts are provided by His-188 and Glu-190. 2-oxoglutarate is bound by residues Asn-198 and Lys-206. Zn(2+)-binding residues include Cys-234 and His-240. Residue Lys-241 participates in 2-oxoglutarate binding. His-276 provides a ligand contact to Fe cation. Positions 306 and 308 each coordinate Zn(2+). The tract at residues 358-384 (ELPPRAGNEEECPEEDMEGVEDGEEGD) is disordered. Residues 366–382 (EEECPEEDMEGVEDGEE) are compositionally biased toward acidic residues. Lys-471 participates in a covalent cross-link: (Microbial infection) Glycyl lysine isopeptide (Lys-Gly) (interchain with G-Cter in SUMO). 2 disordered regions span residues 501 to 537 (FSGS…RAQG) and 616 to 641 (SDDE…KPLS). Residues 509–532 (SSSLGSGSSRDSISSDSETSEPLS) show a composition bias toward low complexity. At Ser-523 the chain carries Phosphoserine. The interval 597–638 (RQPLSKLPRHHPLVLQECVSDDETSEQLTPEEEAEETEAWAK) is interaction with NCOR1. The span at 616 to 634 (SDDETSEQLTPEEEAEETE) shows a compositional bias: acidic residues. Residues 709-767 (MCFTSTGCSTDINLSTPYLEEDGTSILVSCKKCSVRVHASCYGVPPAKASEDWMCSRCS) form a PHD-type 1 zinc finger. The C2HC pre-PHD-type zinc finger occupies 772-805 (EEDCCLCSLRGGALQRANDDRWVHVSCAVAILEA). A PHD-type 2 zinc finger spans residues 828-885 (LKCIFCKKRRKRTAGCCVQCSHGRCPTAFHVSCAQAAGVMMQPDDWPFVVFITCFRHK). 2 consecutive Tudor domains span residues 897–954 (QSIT…CLQF) and 955–1011 (GPPA…EELP).

The protein belongs to the JHDM3 histone demethylase family. In terms of assembly, interacts with histone deacetylase proteins HDAC1, HDAC2 and HDAC3. Interacts with RB and NCOR1. Interacts with VRK1. Interacts with FBXO22; this interaction promotes KDM4A ubiquitination. As to quaternary structure, (Microbial infection) Interacts with HTLV-1 Tax protein. Fe(2+) serves as cofactor. (Microbial infection) SUMOylated by human herpesvirus 8 E3 SUMO-protein ligase K-bZIP/K8 at Lys-471; thereby modulating the chromatin binding and histone demethylase activity of KDM4A. Post-translationally, ubiquitinated by RNF8 and RNF168 following DNA damage, leading to its degradation. Degradation promotes accessibility of H4K20me2 mark for DNA repair protein TP53BP1, which is then recruited. Also ubiquitinated by the SCF(FBXO22) complex; leading to proteasomal degradation. In terms of tissue distribution, ubiquitous.

The protein resides in the nucleus. The catalysed reaction is N(6),N(6),N(6)-trimethyl-L-lysyl(9)-[histone H3] + 2 2-oxoglutarate + 2 O2 = N(6)-methyl-L-lysyl(9)-[histone H3] + 2 formaldehyde + 2 succinate + 2 CO2. The enzyme catalyses N(6),N(6),N(6)-trimethyl-L-lysyl(36)-[histone H3] + 2 2-oxoglutarate + 2 O2 = N(6)-methyl-L-lysyl(36)-[histone H3] + 2 formaldehyde + 2 succinate + 2 CO2. Several specific inhibitors are being developed and tested. Histone demethylase that specifically demethylates 'Lys-9' and 'Lys-36' residues of histone H3, thereby playing a central role in histone code. Does not demethylate histone H3 'Lys-4', H3 'Lys-27' nor H4 'Lys-20'. Demethylates trimethylated H3 'Lys-9' and H3 'Lys-36' residue, while it has no activity on mono- and dimethylated residues. Demethylation of Lys residue generates formaldehyde and succinate. Participates in transcriptional repression of ASCL2 and E2F-responsive promoters via the recruitment of histone deacetylases and NCOR1, respectively. Its function is as follows. Crucial for muscle differentiation, promotes transcriptional activation of the Myog gene by directing the removal of repressive chromatin marks at its promoter. Lacks the N-terminal demethylase domain. The protein is Lysine-specific demethylase 4A (KDM4A) of Homo sapiens (Human).